The chain runs to 288 residues: G1/S-specific cyclin-D2 (288 aa).

The Cyclin N-terminal domain occupies 26-151 (VLQNLLTIEE…VVLGKLKWNL (126 aa)). Residues 264 to 288 (DQDGSKSEDELDQASTPTDVRDIDL) are disordered. Phosphoserine is present on S270. At T279 the chain carries Phosphothreonine.

Belongs to the cyclin family. Cyclin D subfamily. In terms of assembly, interacts with either CDK4 or CDK6 protein kinase to form a serine/threonine kinase holoenzyme complex. The cyclin subunit imparts substrate specificity to the complex. Phosphorylation at Thr-279 by MAP kinases is required for ubiquitination and degradation by the DCX(AMBRA1) complex. In terms of processing, ubiquitinated by the DCX(AMBRA1) complex during the transition from G1 to S cell phase, leading to its degradation: ubiquitination is dependent on Thr-279 phosphorylation. The DCX(AMBRA1) complex represents the major regulator of CCND2 stability during the G1/S transition. Polyubiquitinated by the SCF(FBXL2) complex, leading to proteasomal degradation.

The protein resides in the nucleus. It localises to the cytoplasm. It is found in the nucleus membrane. In terms of biological role, regulatory component of the cyclin D2-CDK4 (DC) complex that phosphorylates and inhibits members of the retinoblastoma (RB) protein family including RB1 and regulates the cell-cycle during G(1)/S transition. Phosphorylation of RB1 allows dissociation of the transcription factor E2F from the RB/E2F complex and the subsequent transcription of E2F target genes which are responsible for the progression through the G(1) phase. Hypophosphorylates RB1 in early G(1) phase. Cyclin D-CDK4 complexes are major integrators of various mitogenenic and antimitogenic signals. This Sus scrofa (Pig) protein is G1/S-specific cyclin-D2 (CCND2).